The following is a 571-amino-acid chain: Proline--tRNA ligase (571 aa).

Belongs to the class-II aminoacyl-tRNA synthetase family. ProS type 1 subfamily. In terms of assembly, homodimer.

It localises to the cytoplasm. It catalyses the reaction tRNA(Pro) + L-proline + ATP = L-prolyl-tRNA(Pro) + AMP + diphosphate. In terms of biological role, catalyzes the attachment of proline to tRNA(Pro) in a two-step reaction: proline is first activated by ATP to form Pro-AMP and then transferred to the acceptor end of tRNA(Pro). As ProRS can inadvertently accommodate and process non-cognate amino acids such as alanine and cysteine, to avoid such errors it has two additional distinct editing activities against alanine. One activity is designated as 'pretransfer' editing and involves the tRNA(Pro)-independent hydrolysis of activated Ala-AMP. The other activity is designated 'posttransfer' editing and involves deacylation of mischarged Ala-tRNA(Pro). The misacylated Cys-tRNA(Pro) is not edited by ProRS. This Leuconostoc citreum (strain KM20) protein is Proline--tRNA ligase.